A 567-amino-acid polypeptide reads, in one-letter code: tRNA (uracil-O(2)-)-methyltransferase (567 aa).

Position 107 is a phosphoserine (serine 107).

It belongs to the TRM44 family.

It localises to the cytoplasm. The enzyme catalyses uridine(44) in tRNA(Ser) + S-adenosyl-L-methionine = 2'-O-methyluridine(44) in tRNA(Ser) + S-adenosyl-L-homocysteine + H(+). In terms of biological role, tRNA (uracil-O(2)-)-methyltransferase, which catalyzes the formation of O(2)-methyluracil at position 44 (Um44) in tRNA(Ser). The polypeptide is tRNA (uracil-O(2)-)-methyltransferase (TRM44) (Saccharomyces cerevisiae (strain ATCC 204508 / S288c) (Baker's yeast)).